Here is a 250-residue protein sequence, read N- to C-terminus: MSHKIAAVCLLMSCLIATAYSAAKVPISIYYESLCPDSAKFITEQVYPAVKGELRDVVELTFVPFGKSQFVTQGSEVTFTCHHGPNECYGNKVHACAIEHIQANSYQVEYTRESLTMDFINCLMKAGKNFPDNVYPGQRCASENHINNWENIKTCANSTEGSVLLRKAGESTMRLKEPLTSVPTILFNEQFDKKVNDRAQVNLVGTICQYVSAPQPRICNQHNGASTPSLASVSAILSSLLGLWFIRSFY.

Residues 1–21 (MSHKIAAVCLLMSCLIATAYS) form the signal peptide. A glycan (N-linked (GlcNAc...) asparagine) is linked at N157.

The protein belongs to the GILT family. Conjugated to URM1, a ubiquitin-like protein.

It is found in the secreted. In terms of biological role, involved in the immune response to bacterial infection. The polypeptide is GILT-like protein 1 (Drosophila melanogaster (Fruit fly)).